The chain runs to 152 residues: Ribonuclease H (152 aa).

The RNase H type-1 domain occupies 1–142; that stretch reads MDSKVVIYTD…ADKLAVQGRE (142 aa). Mg(2+)-binding residues include aspartate 10, glutamate 48, aspartate 70, and aspartate 134.

The protein belongs to the RNase H family. In terms of assembly, monomer. It depends on Mg(2+) as a cofactor.

The protein resides in the cytoplasm. It carries out the reaction Endonucleolytic cleavage to 5'-phosphomonoester.. Its function is as follows. Endonuclease that specifically degrades the RNA of RNA-DNA hybrids. The polypeptide is Ribonuclease H (Rickettsia typhi (strain ATCC VR-144 / Wilmington)).